Here is an 84-residue protein sequence, read N- to C-terminus: Cytochrome b559 subunit alpha (84 aa).

Residues 2-20 (AGTTGERPFSDIITSVRYW) are Cytoplasmic-facing. The chain crosses the membrane as a helical span at residues 21 to 35 (VIHSITIPALFIAGW). Residue His-23 coordinates heme. At 36–84 (LFVSTGLAYDVFGTPRPDSYYAQEQRSIPLVTDRFEAKQQVETFLEQLK) the chain is on the lumenal side.

It belongs to the PsbE/PsbF family. Heterodimer of an alpha subunit and a beta subunit. PSII is composed of 1 copy each of membrane proteins PsbA, PsbB, PsbC, PsbD, PsbE, PsbF, PsbH, PsbI, PsbJ, PsbK, PsbL, PsbM, PsbT, PsbX, PsbY, PsbZ, Psb30/Ycf12, peripheral proteins PsbO, CyanoQ (PsbQ), PsbU, PsbV and a large number of cofactors. It forms dimeric complexes. It depends on heme b as a cofactor.

It localises to the cellular thylakoid membrane. Its function is as follows. This b-type cytochrome is tightly associated with the reaction center of photosystem II (PSII). PSII is a light-driven water:plastoquinone oxidoreductase that uses light energy to abstract electrons from H(2)O, generating O(2) and a proton gradient subsequently used for ATP formation. It consists of a core antenna complex that captures photons, and an electron transfer chain that converts photonic excitation into a charge separation. This is Cytochrome b559 subunit alpha from Thermostichus vulcanus (Synechococcus vulcanus).